The following is a 425-amino-acid chain: Serine--tRNA ligase (425 aa).

230–232 is a binding site for L-serine; that stretch reads TGE. 261-263 contacts ATP; it reads RKE. Glutamate 284 serves as a coordination point for L-serine. 348–351 serves as a coordination point for ATP; it reads EISS. Position 385 (serine 385) interacts with L-serine.

The protein belongs to the class-II aminoacyl-tRNA synthetase family. Type-1 seryl-tRNA synthetase subfamily. As to quaternary structure, homodimer. The tRNA molecule binds across the dimer.

It localises to the cytoplasm. It catalyses the reaction tRNA(Ser) + L-serine + ATP = L-seryl-tRNA(Ser) + AMP + diphosphate + H(+). It carries out the reaction tRNA(Sec) + L-serine + ATP = L-seryl-tRNA(Sec) + AMP + diphosphate + H(+). It functions in the pathway aminoacyl-tRNA biosynthesis; selenocysteinyl-tRNA(Sec) biosynthesis; L-seryl-tRNA(Sec) from L-serine and tRNA(Sec): step 1/1. Catalyzes the attachment of serine to tRNA(Ser). Is also able to aminoacylate tRNA(Sec) with serine, to form the misacylated tRNA L-seryl-tRNA(Sec), which will be further converted into selenocysteinyl-tRNA(Sec). This Wolbachia sp. subsp. Brugia malayi (strain TRS) protein is Serine--tRNA ligase.